The chain runs to 203 residues: Ribonuclease HII (203 aa).

In terms of domain architecture, RNase H type-2 spans 14–203 (GVIAGVDEVG…ILNSTKRALL (190 aa)). The a divalent metal cation site is built by Asp-20, Glu-21, and Asp-112.

It belongs to the RNase HII family. Mn(2+) is required as a cofactor. The cofactor is Mg(2+).

The protein resides in the cytoplasm. The catalysed reaction is Endonucleolytic cleavage to 5'-phosphomonoester.. In terms of biological role, endonuclease that specifically degrades the RNA of RNA-DNA hybrids. The protein is Ribonuclease HII of Wolbachia sp. subsp. Brugia malayi (strain TRS).